A 163-amino-acid polypeptide reads, in one-letter code: Transcription antitermination protein NusB (163 aa).

The interval 1–21 is disordered; it reads MTTFLSDSEHPQDVKAPPKSA.

The protein belongs to the NusB family.

Functionally, involved in transcription antitermination. Required for transcription of ribosomal RNA (rRNA) genes. Binds specifically to the boxA antiterminator sequence of the ribosomal RNA (rrn) operons. The protein is Transcription antitermination protein NusB of Dechloromonas aromatica (strain RCB).